Reading from the N-terminus, the 179-residue chain is Ribulose bisphosphate carboxylase small subunit, chloroplastic 1/4 (179 aa).

A chloroplast-targeting transit peptide spans 1–58 (MAASSTMLSSVATAACAAPAQASMVAPFVGLKSTSAFPVTQKPATGLSTLPSNGGRVQ).

This sequence belongs to the RuBisCO small chain family. In terms of assembly, heterohexadecamer of 8 large and 8 small subunits.

The protein resides in the plastid. It localises to the chloroplast. In terms of biological role, ruBisCO catalyzes two reactions: the carboxylation of D-ribulose 1,5-bisphosphate, the primary event in carbon dioxide fixation, as well as the oxidative fragmentation of the pentose substrate. Both reactions occur simultaneously and in competition at the same active site. Although the small subunit is not catalytic it is essential for maximal activity. This is Ribulose bisphosphate carboxylase small subunit, chloroplastic 1/4 (RBCS1) from Fritillaria agrestis (Stinkbells).